The primary structure comprises 754 residues: 5-methyltetrahydropteroyltriglutamate--homocysteine methyltransferase (754 aa).

5-methyltetrahydropteroyltri-L-glutamate contacts are provided by residues 15–18 (RELK) and Lys114. Residues 430-432 (IGS) and Glu483 each bind L-homocysteine. L-methionine is bound by residues 430 to 432 (IGS) and Glu483. 5-methyltetrahydropteroyltri-L-glutamate contacts are provided by residues 514–515 (RC) and Trp560. Asp598 contributes to the L-homocysteine binding site. Asp598 serves as a coordination point for L-methionine. Glu604 contacts 5-methyltetrahydropteroyltri-L-glutamate. Zn(2+)-binding residues include His641, Cys643, and Glu665. The Proton donor role is filled by His694. Cys726 contributes to the Zn(2+) binding site.

It belongs to the vitamin-B12 independent methionine synthase family. Zn(2+) serves as cofactor.

The enzyme catalyses 5-methyltetrahydropteroyltri-L-glutamate + L-homocysteine = tetrahydropteroyltri-L-glutamate + L-methionine. It participates in amino-acid biosynthesis; L-methionine biosynthesis via de novo pathway; L-methionine from L-homocysteine (MetE route): step 1/1. Its function is as follows. Catalyzes the transfer of a methyl group from 5-methyltetrahydrofolate to homocysteine resulting in methionine formation. The sequence is that of 5-methyltetrahydropteroyltriglutamate--homocysteine methyltransferase from Campylobacter jejuni (strain RM1221).